A 370-amino-acid polypeptide reads, in one-letter code: Putative agmatine deiminase (370 aa).

Cys-361 functions as the Amidino-cysteine intermediate in the catalytic mechanism.

Belongs to the agmatine deiminase family.

It catalyses the reaction agmatine + H2O = N-carbamoylputrescine + NH4(+). The polypeptide is Putative agmatine deiminase (Shewanella sp. (strain MR-4)).